Consider the following 104-residue polypeptide: Pterin-4-alpha-carbinolamine dehydratase (104 aa).

Ala-2 carries the N-acetylalanine modification. Substrate is bound by residues 61-63 (DHH) and 78-81 (STHE).

The protein belongs to the pterin-4-alpha-carbinolamine dehydratase family. As to quaternary structure, homotetramer and homodimer. Heterotetramer with HNF1A; formed by a dimer of dimers. Interacts with HNF1B (via HNF-p1 domain); the interaction increases HNF1B transactivation activity. Mainly expressed in the liver, in pancreatic cells, and in the kidney, especially in the distal convoluted tubule, in the cortical thick ascending limb of Henle's loop and in the connecting tubule.

Its subcellular location is the cytoplasm. It is found in the nucleus. It catalyses the reaction (4aS,6R)-4a-hydroxy-L-erythro-5,6,7,8-tetrahydrobiopterin = (6R)-L-erythro-6,7-dihydrobiopterin + H2O. Functionally, involved in tetrahydrobiopterin biosynthesis. Seems to both prevent the formation of 7-pterins and accelerate the formation of quinonoid-BH2. Coactivator for HNF1A-dependent transcription. Regulates the dimerization of homeodomain protein HNF1A and enhances its transcriptional activity. Also acts as a coactivator for HNF1B-dependent transcription. The sequence is that of Pterin-4-alpha-carbinolamine dehydratase (Pcbd1) from Mus musculus (Mouse).